The following is a 576-amino-acid chain: Colicin-E7 (576 aa).

Disordered regions lie at residues 1 to 75 (MSGG…GGGS), 421 to 478 (SSAL…PVPD), and 506 to 557 (DPEL…GVYD). Gly residues predominate over residues 19–35 (NINGGPTGLGGNGGASD). Residues 36-45 (GSGWSSENNP) are compositionally biased toward low complexity. Residues 46–75 (WGGGSGSGVHWGGGSGHGNGGGNSNSGGGS) are compositionally biased toward gly residues. 2 stretches are compositionally biased toward basic and acidic residues: residues 424 to 447 (LERRKQKENKEKDAKAKLDKESKR) and 535 to 548 (SGKRTSFELHHEKP). Zn(2+) is bound by residues His544, His569, and His573.

Belongs to the colicin/pyosin nuclease family.

This plasmid-coded bactericidal protein is an endonuclease active on both single- and double-stranded DNA but with undefined specificity. Its function is as follows. Colicins are polypeptide toxins produced by and active against E.coli and closely related bacteria. The chain is Colicin-E7 (colE7) from Escherichia coli.